A 178-amino-acid polypeptide reads, in one-letter code: Caveolin-1 (178 aa).

N-acetylserine is present on Ser2. Ser2 is subject to Phosphoserine. The tract at residues 2–94 is required for homooligomerization; that stretch reads SGGKYVDSEG…WKASFTTFTV (93 aa). The Cytoplasmic segment spans residues 2 to 104; it reads SGGKYVDSEG…TKYWFYRLLS (103 aa). Lys5 carries the post-translational modification N6-acetyllysine; alternate. Lys5 is covalently cross-linked (Glycyl lysine isopeptide (Lys-Gly) (interchain with G-Cter in ubiquitin); alternate). Tyr6 is subject to Phosphotyrosine. Ser9 bears the Phosphoserine mark. A Phosphotyrosine; by ABL1 modification is found at Tyr14. A Phosphotyrosine modification is found at Tyr25. Glycyl lysine isopeptide (Lys-Gly) (interchain with G-Cter in ubiquitin) cross-links involve residues Lys26, Lys30, Lys39, Lys47, and Lys57. The segment at 82-94 is interaction with CAVIN3; the sequence is DGIWKASFTTFTV. An intramembrane region (helical) is located at residues 105–125; it reads ALFGIPMALIWGIYFAILSFL. Over 126–178 the chain is Cytoplasmic; that stretch reads HIWAVVPCIKSFLIEIQCISRVYSIYVHTFCDPLFEAIGKIFSNIRINMQKEI. The tract at residues 131–142 is interacts with SPRY1, SPRY2, SPRY3 and SPRY4; the sequence is VPCIKSFLIEIQ. Residues Cys133, Cys143, and Cys156 are each lipidated (S-palmitoyl cysteine). The interacts with SPRY1, SPRY2, and SPRY4 stretch occupies residues 149–160; the sequence is SIYVHTFCDPLF. An interacts with SPRY1, SPRY2, SPRY3 and SPRY4 region spans residues 167–178; the sequence is FSNIRINMQKEI.

The protein belongs to the caveolin family. As to quaternary structure, homooligomer. Interacts (via the N-terminus) with DPP4; the interaction is direct. Forms a stable heterooligomeric complex with CAV2 that targets to lipid rafts and drives caveolae formation. Interacts with PACSIN2; this interaction induces membrane tubulation. Interacts with BMX, BTK, CTNNB1, CDH1, GLIPR2, JUP, NOSTRIN, SNAP25 and STX1A. Interacts with SLC7A9. Interacts with TGFBR1. Interacts with CAVIN3 (via leucine-zipper domain) in a cholesterol-sensitive manner. Interacts with CAVIN1. Interacts with EHD2 in a cholesterol-dependent manner. Forms a ternary complex with UBXN6 and VCP; mediates CAV1 targeting to lysosomes for degradation. Interacts with ABCG1; this interaction regulates ABCG1-mediated cholesterol efflux. Interacts with NEU3; this interaction enhances NEU3 sialidase activity within caveola. Interacts (via C-terminus) with SPRY1, SPRY2 (via C-terminus), SPRY3, and SPRY4. In terms of processing, phosphorylated at Tyr-14 by ABL1 in response to oxidative stress. Ubiquitinated. Undergo monoubiquitination and multi- and/or polyubiquitination. Monoubiquitination of N-terminal lysines promotes integration in a ternary complex with UBXN6 and VCP which promotes oligomeric CAV1 targeting to lysosomes for degradation. Ubiquitinated by ZNRF1; leading to degradation and modulation of the TLR4-mediated immune response.

The protein resides in the golgi apparatus membrane. It is found in the cell membrane. Its subcellular location is the membrane. It localises to the caveola. The protein localises to the membrane raft. May act as a scaffolding protein within caveolar membranes. Forms a stable heterooligomeric complex with CAV2 that targets to lipid rafts and drives caveolae formation. Mediates the recruitment of CAVIN proteins (CAVIN1/2/3/4) to the caveolae. Interacts directly with G-protein alpha subunits and can functionally regulate their activity. Involved in the costimulatory signal essential for T-cell receptor (TCR)-mediated T-cell activation. Its binding to DPP4 induces T-cell proliferation and NF-kappa-B activation in a T-cell receptor/CD3-dependent manner. Recruits CTNNB1 to caveolar membranes and may regulate CTNNB1-mediated signaling through the Wnt pathway. Negatively regulates TGFB1-mediated activation of SMAD2/3 by mediating the internalization of TGFBR1 from membrane rafts leading to its subsequent degradation. Binds 20(S)-hydroxycholesterol (20(S)-OHC). In Otolemur garnettii (Small-eared galago), this protein is Caveolin-1 (CAV1).